The following is a 348-amino-acid chain: ELAV-like protein 3 (348 aa).

RRM domains follow at residues 34-112, 120-200, and 265-343; these read TNLI…YARP, ANLY…FANN, and WCIF…FKTS.

This sequence belongs to the RRM elav family. In terms of tissue distribution, expression is neural-specific in both embryos and adults. Expressed from neurula stage onwards in primary motor-, inter- and sensory-neurons. Expressed in the closing neural tube and motor neurons of stage 18 embryos, and primarily in the ventricular zone and dorsal region of the tailbud and adult brain. Expressed from stage 26 onwards in the differentiating ganglion cell layer of the retina, extending to the inner nuclear layer at later stages.

Its function is as follows. RNA-binding protein that binds to AU-rich element (ARE) sequences of target mRNAs. May also bind poly-A tracts via RRM 3. May be involved in neuronal differentiation and maintenance. This is ELAV-like protein 3 (elavl3) from Xenopus laevis (African clawed frog).